Consider the following 143-residue polypeptide: Glutamate-rich protein 4 (143 aa).

Positions 90 to 106 (LEEEEEDDDEEEQEEEG) are enriched in acidic residues. Residues 90 to 143 (LEEEEEDDDEEEQEEEGEGKNCVEENKGLQGKQGEKCSGNPYPAQRLPDFEMTI) form a disordered region. Positions 107 to 116 (EGKNCVEENK) are enriched in basic and acidic residues.

This is Glutamate-rich protein 4 (Erich4) from Rattus norvegicus (Rat).